A 359-amino-acid chain; its full sequence is Membrane-bound lytic murein transglycosylase C (359 aa).

The signal sequence occupies residues Met1–Ser16. Residue Cys17 is the site of N-palmitoyl cysteine attachment. Cys17 carries the S-diacylglycerol cysteine lipid modification.

Belongs to the transglycosylase Slt family.

It is found in the cell outer membrane. The enzyme catalyses Exolytic cleavage of the (1-&gt;4)-beta-glycosidic linkage between N-acetylmuramic acid (MurNAc) and N-acetylglucosamine (GlcNAc) residues in peptidoglycan, from either the reducing or the non-reducing ends of the peptidoglycan chains, with concomitant formation of a 1,6-anhydrobond in the MurNAc residue.. Its function is as follows. Murein-degrading enzyme. May play a role in recycling of muropeptides during cell elongation and/or cell division. The protein is Membrane-bound lytic murein transglycosylase C of Escherichia coli O139:H28 (strain E24377A / ETEC).